A 509-amino-acid polypeptide reads, in one-letter code: Diacylglycerol kinase 5 (509 aa).

In terms of domain architecture, DAGKc spans 36–187; it reads TPASPVLVFI…IDNWHILMRM (152 aa). Residues 439 to 452 are compositionally biased toward basic and acidic residues; it reads RSVFDPSTPRHQDG. The disordered stretch occupies residues 439–509; that stretch reads RSVFDPSTPR…SNVHGWSHVL (71 aa). Over residues 453–467 the composition is skewed to acidic residues; sequence AEDYDDNEDDSVAEG. Over residues 468 to 489 the composition is skewed to basic and acidic residues; sequence EEFRKFGAADTFKIPDEGEHSN. A compositionally biased stretch (basic residues) spans 490–500; it reads KKGRASRRRNS.

It belongs to the eukaryotic diacylglycerol kinase family. As to quaternary structure, monomer.

It carries out the reaction a 1,2-diacyl-sn-glycerol + ATP = a 1,2-diacyl-sn-glycero-3-phosphate + ADP + H(+). Its function is as follows. Phosphorylates the second messenger diacylglycerol (DAG) to generate phosphatidic acid (PA), another important signaling molecule. PA is required for plant development and responses to abiotic stress and pathogen attack. May be involved in the accumulation of PA during cold stress. In Arabidopsis thaliana (Mouse-ear cress), this protein is Diacylglycerol kinase 5 (DGK5).